A 183-amino-acid chain; its full sequence is Adenine phosphoribosyltransferase (183 aa).

It belongs to the purine/pyrimidine phosphoribosyltransferase family. In terms of assembly, homodimer.

It is found in the cytoplasm. The enzyme catalyses AMP + diphosphate = 5-phospho-alpha-D-ribose 1-diphosphate + adenine. It functions in the pathway purine metabolism; AMP biosynthesis via salvage pathway; AMP from adenine: step 1/1. Catalyzes a salvage reaction resulting in the formation of AMP, that is energically less costly than de novo synthesis. The protein is Adenine phosphoribosyltransferase of Edwardsiella ictaluri (strain 93-146).